A 508-amino-acid chain; its full sequence is Photosystem II CP47 reaction center protein (508 aa).

A run of 6 helical transmembrane segments spans residues 21–36, 101–115, 140–156, 203–218, 237–252, and 457–472; these read AVHIMHTALVSGWAGS, IVFSGLCFLAAIWHW, GIHLFLSGLACFGFGAF, IAAGTLGILAGLFHLS, VLSSSIAAVFFAAFVV, and SFALLFFFGHIWHGAR.

This sequence belongs to the PsbB/PsbC family. PsbB subfamily. PSII is composed of 1 copy each of membrane proteins PsbA, PsbB, PsbC, PsbD, PsbE, PsbF, PsbH, PsbI, PsbJ, PsbK, PsbL, PsbM, PsbT, PsbX, PsbY, PsbZ, Psb30/Ycf12, at least 3 peripheral proteins of the oxygen-evolving complex and a large number of cofactors. It forms dimeric complexes. Binds multiple chlorophylls. PSII binds additional chlorophylls, carotenoids and specific lipids. is required as a cofactor.

Its subcellular location is the plastid. It localises to the chloroplast thylakoid membrane. One of the components of the core complex of photosystem II (PSII). It binds chlorophyll and helps catalyze the primary light-induced photochemical processes of PSII. PSII is a light-driven water:plastoquinone oxidoreductase, using light energy to abstract electrons from H(2)O, generating O(2) and a proton gradient subsequently used for ATP formation. The chain is Photosystem II CP47 reaction center protein from Ranunculus macranthus (Large buttercup).